The chain runs to 345 residues: High mobility group protein 20A (345 aa).

2 disordered regions span residues 1 to 124 and 167 to 198; these read MENT…TERP and QYQN…VRGV. Polar residues-rich tracts occupy residues 32-48 and 57-67; these read LSGS…PTLQ and LQQSGEQQLGN. A compositionally biased stretch (basic residues) spans 80 to 94; that stretch reads TRRGGWTKGRKRKRS. Residues 101 to 169 constitute a DNA-binding region (HMG box); sequence PKAPLTGYVR…RYTKELQQYQ (69 aa). Residues 112 to 124 are compositionally biased toward basic and acidic residues; sequence MNERREQLRTERP. A compositionally biased stretch (polar residues) spans 167 to 180; it reads QYQNTDAYQTYSRK. The stretch at 227–290 forms a coiled coil; the sequence is SKAREAELRQ…QHLQSVRQAL (64 aa).

Its subcellular location is the nucleus. Plays a role in neuronal differentiation. The sequence is that of High mobility group protein 20A (hmg20a) from Xenopus tropicalis (Western clawed frog).